Consider the following 75-residue polypeptide: MKNKPDDRRDNVDKIQYNITKTIQNCEFADEIIAKTDDEKTKKTLIEKNERRREALDGMREEIKDEARDKKNGYM.

Residues R52–M75 are disordered.

The protein belongs to the Tlp family.

The protein is Protein Tlp homolog of Clostridium botulinum (strain Okra / Type B1).